A 223-amino-acid polypeptide reads, in one-letter code: Ribonuclease 3 (223 aa).

Residues Met-1–Gly-131 form the RNase III domain. Residue Glu-44 participates in Mg(2+) binding. Asp-48 is a catalytic residue. Residues Asp-117 and Glu-120 each coordinate Mg(2+). The active site involves Glu-120. The DRBM domain maps to Asp-157–Asn-220.

It belongs to the ribonuclease III family. Homodimer. Requires Mg(2+) as cofactor.

The protein localises to the cytoplasm. The enzyme catalyses Endonucleolytic cleavage to 5'-phosphomonoester.. Functionally, digests double-stranded RNA. Involved in the processing of primary rRNA transcript to yield the immediate precursors to the large and small rRNAs (23S and 16S). Processes some mRNAs, and tRNAs when they are encoded in the rRNA operon. Processes pre-crRNA and tracrRNA of type II CRISPR loci if present in the organism. The chain is Ribonuclease 3 from Tropheryma whipplei (strain Twist) (Whipple's bacillus).